The following is a 5148-amino-acid chain: E3 ubiquitin-protein ligase RNF213 (5148 aa).

Residues 38 to 48 are compositionally biased toward polar residues; the sequence is DNTLVVSSTPE. The tract at residues 38-341 is disordered; it reads DNTLVVSSTP…QAAAPEPTSA (304 aa). The span at 69–78 shows a compositional bias: basic and acidic residues; it reads PGKELEKPEE. Over residues 101–113 the composition is skewed to polar residues; it reads GTISSSEAPSSGL. A compositionally biased stretch (low complexity) spans 130 to 146; that stretch reads PQNQAQQGGAASQPGHP. At Ser-196 the chain carries Phosphoserine. Basic and acidic residues-rich tracts occupy residues 233-245, 257-267, and 279-289; these read SKGETSGQEKKVP, AGKETGEDVRK, and KHGDQEAELKG. Residues 319 to 335 are compositionally biased toward low complexity; sequence AAAVKTQQAAAPQQAAA. A Glycyl lysine isopeptide (Lys-Gly) (interchain with G-Cter in SUMO2) cross-link involves residue Lys-1128. ATP is bound by residues 1957–1962, Glu-2060, Ala-2114, Asp-2116, and Arg-2177; that span reads GVGKSL. Ser-2234 is subject to Phosphoserine. Residues Lys-2460 and Ser-2535 each contribute to the ATP site. A coiled-coil region spans residues 3435–3465; the sequence is EEMEIETSQSKELAEEQMEVEDSEEMKKASD. Residues Cys-3947, Cys-3950, Cys-3962, His-3964, Cys-3967, Cys-3970, Cys-3982, Cys-3985, Cys-4451, and His-4455 each contribute to the Zn(2+) site. The RING-type zinc finger occupies 3947-3986; sequence CFICHGDAQDPVCLPCDHVYCLRCIQTWLIPGQMMCPYCL. Residues 4429 to 4501 form an RZ-type zinc finger; the sequence is MPEDLLVHAR…IRNNEDRTQT (73 aa). Cys-4462 serves as the catalytic Nucleophile; for E3 ubiquitin-lipopolysaccharide ligase activity. Zn(2+) is bound by residues Cys-4471 and Cys-4474.

This sequence belongs to the AAA ATPase family. In terms of assembly, monomer. Interacts with UBE2L3/UBCH7; UBE2L3/UBCH7 is the most efficient ubiquitin-conjugating enzyme E2 for the ubiquitin ligase activity. Interacts with UBE2N/UBC13; promoting 'Lys-63'-linked ubiquitination of target proteins.

Its subcellular location is the cytoplasm. It is found in the cytosol. The protein resides in the lipid droplet. The enzyme catalyses S-ubiquitinyl-[E2 ubiquitin-conjugating enzyme]-L-cysteine + [acceptor protein]-L-lysine = [E2 ubiquitin-conjugating enzyme]-L-cysteine + N(6)-ubiquitinyl-[acceptor protein]-L-lysine.. The catalysed reaction is ATP + H2O = ADP + phosphate + H(+). The protein operates within protein modification; protein ubiquitination. Functionally, atypical E3 ubiquitin ligase that can catalyze ubiquitination of both proteins and lipids, and which is involved in various processes, such as lipid metabolism, angiogenesis and cell-autonomous immunity. Acts as a key immune sensor by catalyzing ubiquitination of the lipid A moiety of bacterial lipopolysaccharide (LPS) via its RZ-type zinc-finger: restricts the proliferation of cytosolic bacteria, such as Salmonella, by generating the bacterial ubiquitin coat through the ubiquitination of LPS. Also acts indirectly by mediating the recruitment of the LUBAC complex, which conjugates linear polyubiquitin chains. Ubiquitination of LPS triggers cell-autonomous immunity, such as antibacterial autophagy, leading to degradation of the microbial invader. Involved in lipid metabolism by regulating fat storage and lipid droplet formation; act by inhibiting the lipolytic process. Also regulates lipotoxicity by inhibiting desaturation of fatty acids. Also acts as an E3 ubiquitin-protein ligase via its RING-type zinc finger: mediates 'Lys-63'-linked ubiquitination of target proteins. Involved in the non-canonical Wnt signaling pathway in vascular development: acts by mediating ubiquitination and degradation of FLNA and NFATC2 downstream of RSPO3, leading to inhibit the non-canonical Wnt signaling pathway and promoting vessel regression. Also has ATPase activity; ATPase activity is required for ubiquitination of LPS. This chain is E3 ubiquitin-protein ligase RNF213, found in Mus musculus (Mouse).